The primary structure comprises 291 residues: G1/S-specific cyclin-D1 (291 aa).

Residue T282 is modified to Phosphothreonine.

The protein belongs to the cyclin family. Cyclin D subfamily. As to quaternary structure, interacts with the CDK4 and CDK6 protein kinases to form a serine/threonine kinase holoenzyme complex. The cyclin subunit imparts substrate specificity to the complex. In terms of processing, phosphorylation at Thr-282 by MAP kinases is required for ubiquitination and degradation by the DCX(AMBRA1) complex. Ubiquitinated by the DCX(AMBRA1) complex during the transition from G1 to S cell phase, leading to its degradation. The DCX(AMBRA1) complex represents the major regulator of CCND1 stability during the G1/S transition.

It localises to the nucleus. Its subcellular location is the cytoplasm. Regulatory component of the cyclin D1-CDK4 (DC) complex that phosphorylates and inhibits members of the retinoblastoma (RB) protein family including RB1 and regulates the cell-cycle during G(1)/S transition. Phosphorylation of RB1 allows dissociation of the transcription factor E2F from the RB/E2F complex and the subsequent transcription of E2F target genes which are responsible for the progression through the G(1) phase. Hypophosphorylates RB1 in early G(1) phase. Cyclin D-CDK4 complexes are major integrators of various mitogenenic and antimitogenic signals. The polypeptide is G1/S-specific cyclin-D1 (ccnd1) (Danio rerio (Zebrafish)).